Here is a 231-residue protein sequence, read N- to C-terminus: DINGGGATLPQKLYQTSGVLTAGFAPYIGVGSGNGKAAFLTNDYTKLTATELSTYATNLQPTWGKLIQVPSVATSVAIPFRITDWSGISGAGRTGPITVVYRITYMSPDFAASTLAGLDDATKGVSPAPSNVSDAIAQVLPPNDPSAPLDVTNPDDGVAGVQPYPDSGYPILGFTNLIFSAFFTKAFFTKHFGDTNNNDDAITANRFVPLPDNWKTELSTYATNLQPTWGK.

It carries out the reaction NAD(+) + (ADP-D-ribosyl)n-acceptor = nicotinamide + (ADP-D-ribosyl)n+1-acceptor + H(+).. Its activity is regulated as follows. Activity increases up to 5-6 times with Mg(2+) at 50 uM or higher ion concentration. 3-aminobenzamide (3-ABA) inhibits the activity by up to half and nicotinamide to a lesser extent. Zn(2+) inhibits the activity to half-maximal rate but at 500 uM concentration of the ion. Its function is as follows. Catalyzes auto- and hetero-ADP ribosylation and produces short oligomers by elongating the ADP-ribose chain (up to 6-mer). Binds DNA non-specifically but with high affinity. Forms very stable complexes with circular DNA wherein the circular DNA confers thermostability compared to linear DNA. The sequence is that of NAD(+) ADP-ribosyltransferase from Saccharolobus solfataricus (Sulfolobus solfataricus).